An 88-amino-acid chain; its full sequence is Gene 86 protein (88 aa).

The chain is Gene 86 protein (86) from Mycobacterium phage D29 (Mycobacteriophage D29).